The following is a 338-amino-acid chain: Nucleoid-associated protein VSAL_I1059 (338 aa).

The tract at residues 319–338 (KGTPPNLKDQLTRRLGSSES) is disordered.

This sequence belongs to the YejK family.

The protein resides in the cytoplasm. The protein localises to the nucleoid. This is Nucleoid-associated protein VSAL_I1059 from Aliivibrio salmonicida (strain LFI1238) (Vibrio salmonicida (strain LFI1238)).